Here is a 478-residue protein sequence, read N- to C-terminus: MFPRETKWNISFAGCGFLGVYHIGVASCLREHAPFLVANATHIYGASAGALTATALVTGACLGEAGANIIEVSKEARKRFLGPLHPSFNLVKTIRGCLLKTLPADCHTRASGRLGISLTRVSDGENVIISHFSSKDELIQANVCSTFIPVYCGLIPPTLQGVRYVDGGISDNLPLYELKNTITVSPFSGESDICPQDSSTNIHELRITNTSIQFNLRNLYRLSKALFPPEPMVLREMCKQGYRDGLRFLRRNGLLNQPNPLLALPPVVPQEEDAEEAAVTEERTGGEDRILEHLPARLNEALLEACVEPKDLMTTLSNMLPVRLATAMMVPYTLPLESAVSFTIRLLEWLPDVPEDIRWMKEQTGSICQYLVMRAKRKLGDHLPSRLSEQVELRRAQSLPSVPLSCATYSEALPNWVRNNLSLGDALAKWEECQRQLLLGLFCTNVAFPPDALRMRAPASPTATDPATPQDPSGLPPC.

At 1–8 the chain is on the cytoplasmic side; the sequence is MFPRETKW. The helical transmembrane segment at 9–29 threads the bilayer; the sequence is NISFAGCGFLGVYHIGVASCL. Positions 10–179 constitute a PNPLA domain; sequence ISFAGCGFLG…SDNLPLYELK (170 aa). Residues 14–19 carry the GXGXXG motif; sequence GCGFLG. Topologically, residues 30-42 are extracellular; sequence REHAPFLVANATH. Asn-39 carries an N-linked (GlcNAc...) asparagine glycan. The chain crosses the membrane as a helical span at residues 43 to 63; that stretch reads IYGASAGALTATALVTGACLG. The GXSXG motif lies at 45 to 49; the sequence is GASAG. Ser-47 functions as the Nucleophile in the catalytic mechanism. The Cytoplasmic portion of the chain corresponds to 64-137; it reads EAGANIIEVS…IISHFSSKDE (74 aa). Lys-92 is covalently cross-linked (Glycyl lysine isopeptide (Lys-Gly) (interchain with G-Cter in ubiquitin)). A helical transmembrane segment spans residues 138–158; that stretch reads LIQANVCSTFIPVYCGLIPPT. Topologically, residues 159–323 are extracellular; that stretch reads LQGVRYVDGG…TTLSNMLPVR (165 aa). Asp-166 serves as the catalytic Proton acceptor. The short motif at 166–168 is the DGA/G element; the sequence is DGG. The helical transmembrane segment at 324–344 threads the bilayer; the sequence is LATAMMVPYTLPLESAVSFTI. Topologically, residues 345–478 are cytoplasmic; that stretch reads RLLEWLPDVP…PQDPSGLPPC (134 aa). Position 366 is a phosphoserine; in vitro (Ser-366). Ser-388 carries the post-translational modification Phosphoserine; by PKA. 2 positions are modified to phosphoserine: Ser-398 and Ser-422. Positions 456-478 are disordered; sequence RAPASPTATDPATPQDPSGLPPC. The segment covering 457–478 has biased composition (low complexity); that stretch reads APASPTATDPATPQDPSGLPPC. Ser-460 carries the post-translational modification Phosphoserine; in vitro.

As to quaternary structure, interacts with ABHD5; this association stimulates PNPLA2 triglyceride hydrolase activity. Interacts with SERPINF1; this interaction stimulates the phospholipase A2 activity of PNPLA2. Despite a colocalization in lipid droplets, it probably does not interact with PLIN. Interacts with PLIN5; prevents interaction with ABHD5. Interacts with FAF2. Post-translationally, phosphorylation at Ser-398 by PKA is increased during fasting and moderate intensity exercise, and moderately increases lipolytic activity. In terms of processing, ubiquitinated by PEX2 in response to reactive oxygen species (ROS), leading to its degradation. Ubiquitination is stimulated by LDAH.

Its subcellular location is the lipid droplet. It is found in the cell membrane. It localises to the cytoplasm. It catalyses the reaction a triacylglycerol + H2O = a diacylglycerol + a fatty acid + H(+). The catalysed reaction is a triacylglycerol + H2O = a 1,2-diacylglycerol + a fatty acid + H(+). The enzyme catalyses a triacylglycerol + H2O = a 1,3-diacylglycerol + a fatty acid + H(+). It carries out the reaction a triacyl-sn-glycerol + H2O = a 1,3-diacyl-sn-glycerol + a fatty acid + H(+). It catalyses the reaction a triacyl-sn-glycerol + H2O = a 2,3-diacyl-sn-glycerol + a fatty acid + H(+). The catalysed reaction is a 1-acylglycerol + a 1,3-diacylglycerol = a triacylglycerol + glycerol. The enzyme catalyses a 1-acylglycerol + a 1,2-diacylglycerol = a triacylglycerol + glycerol. It carries out the reaction 2 a 1-acylglycerol = a 1,2-diacylglycerol + glycerol. It catalyses the reaction a triacylglycerol + all-trans-retinol = an all-trans-retinyl ester + a diacylglycerol. The catalysed reaction is 1,2-di-(9Z-octadecenoyl)-glycerol + (9Z)-octadecenoate + H(+) = 1,2,3-tri-(9Z-octadecenoyl)-glycerol + H2O. The enzyme catalyses 1,2,3-tri-(9Z-octadecenoyl)-glycerol + H2O = 1,3-di-(9Z-octadecenoyl)-glycerol + (9Z)-octadecenoate + H(+). It carries out the reaction 1-(9Z-octadecenoyl)-glycerol + 1,3-di-(9Z-octadecenoyl)-glycerol = 1,2,3-tri-(9Z-octadecenoyl)-glycerol + glycerol. It catalyses the reaction 1-(9Z-octadecenoyl)-glycerol + 1,2-di-(9Z-octadecenoyl)-glycerol = 1,2,3-tri-(9Z-octadecenoyl)-glycerol + glycerol. The catalysed reaction is 2 1-(9Z-octadecenoyl)-glycerol = 1,2-di-(9Z-octadecenoyl)-glycerol + glycerol. The enzyme catalyses 1,2,3-tri-(9Z-octadecenoyl)-glycerol + all-trans-retinol = all-trans-retinyl 9Z-octadecenoate + di-(9Z)-octadecenoylglycerol. It carries out the reaction 1,2,3-tri-(9Z)-hexadecenoylglycerol + H2O = 1,3-di-(9Z)-hexadecenoylglycerol + (9Z)-hexadecenoate + H(+). It catalyses the reaction 1,2,3-tri-(9Z,12Z)-octadecadienoylglycerol + H2O = 1,3-di-(9Z,12Z)-octadecadienoylglycerol + (9Z,12Z)-octadecadienoate + H(+). The catalysed reaction is 1,2,3-tri-(9Z,12Z,15Z)-octadecatrienoylglycerol + H2O = 1,3-di-(9Z,12Z,15Z)-octadecatrienoylglycerol + (9Z,12Z,15Z)-octadecatrienoate + H(+). The enzyme catalyses 1,3-di-(9Z)-octadecenoyl-2-hexadecanoylglycerol + H2O = 1,3-di-(9Z-octadecenoyl)-glycerol + hexadecanoate + H(+). It carries out the reaction 1,2-di-(9Z)-octadecenoyl-3-hexadecanoyl-sn-glycerol + H2O = 1-(9Z)-octadecenoyl-3-hexadecanoyl-sn-glycerol + (9Z)-octadecenoate + H(+). It catalyses the reaction 1-hexadecanoyl-2,3-di-(9Z)-octadecenoyl-sn-glycerol + H2O = 1-hexadecanoyl-3-(9Z)-octadecenoyl-sn-glycerol + (9Z)-octadecenoate + H(+). The catalysed reaction is 1,2,3-tri-(9Z-octadecenoyl)-glycerol + H2O = 2,3-di-(9Z)-octadecenoyl-sn-glycerol + (9Z)-octadecenoate + H(+). The enzyme catalyses 1,2,3-tri-(9Z)-hexadecenoylglycerol + H2O = 2,3-di-(9Z)-hexadecenoyl-sn-glycerol + (9Z)-hexadecenoate + H(+). It carries out the reaction 1,2,3-tri-(9Z,12Z)-octadecadienoylglycerol + H2O = 2,3-di-(9Z,12Z)-octadecadienoyl-sn-glycerol + (9Z,12Z)-octadecadienoate + H(+). It catalyses the reaction 1,2,3-tri-(9Z,12Z,15Z)-octadecatrienoylglycerol + H2O = 2,3-di-(9Z,12Z,15Z)-octadecatrienoyl-sn-glycerol + (9Z,12Z,15Z)-octadecatrienoate + H(+). The catalysed reaction is 1,3-di-(9Z)-octadecenoyl-2-hexadecanoylglycerol + H2O = 2-hexadecanoyl-3-(9Z)-octadecenoyl-sn-glycerol + (9Z)-octadecenoate + H(+). The enzyme catalyses 1-hexadecanoyl-2,3-di-(9Z)-octadecenoyl-sn-glycerol + H2O = 2,3-di-(9Z)-octadecenoyl-sn-glycerol + hexadecanoate + H(+). It carries out the reaction 1,2-di-(9Z)-octadecenoyl-3-hexadecanoyl-sn-glycerol + H2O = 2-(9Z-octadecenoyl)-3-hexadecanoyl-sn-glycerol + (9Z)-octadecenoate + H(+). It catalyses the reaction a 1,2-diacyl-sn-glycero-3-phosphocholine + H2O = a 1-acyl-sn-glycero-3-phosphocholine + a fatty acid + H(+). The catalysed reaction is 1,2,3-tri-(9Z-octadecenoyl)-glycerol + 9-hydroxy-octadecanoate = 9-(9Z-octadecenoyloxy)-octadecanoate + 2,3-di-(9Z)-octadecenoyl-sn-glycerol. The enzyme catalyses 1-hexadecanoyl-2,3-di-(9Z)-octadecenoyl-sn-glycerol + 9-hydroxy-octadecanoate = 9-hexadecanoyloxy-octadecanoate + 2,3-di-(9Z)-octadecenoyl-sn-glycerol. It carries out the reaction 1,2,3-tri-(10Z)-heptadecenoylglycerol + 9-hydroxy-octadecanoate = 2,3-di-(10Z-heptadecenoyl)-sn-glycerol + 9-(10Z-heptadecenoyloxy)-octadecanoate. It catalyses the reaction 1,2,3-tri-(9Z,12Z)-octadecadienoylglycerol + 9-hydroxy-octadecanoate = 2,3-di-(9Z,12Z)-octadecadienoyl-sn-glycerol + 9-(9Z,12Z-octadecadienoyloxy)-octadecanoate. The catalysed reaction is 1,2,3-tri-(9Z)-hexadecenoylglycerol + 9-hydroxy-octadecanoate = 2,3-di-(9Z)-hexadecenoyl-sn-glycerol + 9-(9Z-hexadecenoyloxy)-octadecanoate. The enzyme catalyses 9-hydroxy-octadecanoate + 1,2-di-(9Z-octadecenoyl)-sn-glycerol = 9-(9Z-octadecenoyloxy)-octadecanoate + 2-(9Z-octadecenoyl)-glycerol. It carries out the reaction 1-hexadecanoyl-2,3-di-(9Z)-octadecenoyl-sn-glycerol + 9-hydroxy-octadecanoate = 1-hexadecanoyl-3-(9Z)-octadecenoyl-sn-glycerol + 9-(9Z-octadecenoyloxy)-octadecanoate. Its pathway is glycerolipid metabolism; triacylglycerol degradation. Its function is as follows. Catalyzes the initial step in triglyceride hydrolysis in adipocyte and non-adipocyte lipid droplets. Exhibits a strong preference for the hydrolysis of long-chain fatty acid esters at the sn-2 position of the glycerol backbone and acts coordinately with LIPE/HLS and DGAT2 within the lipolytic cascade. Also possesses acylglycerol transacylase and phospholipase A2 activities. Transfers fatty acid from triglyceride to retinol, hydrolyzes retinylesters, and generates 1,3-diacylglycerol from triglycerides. Regulates adiposome size and may be involved in the degradation of adiposomes. Catalyzes the formation of an ester bond between hydroxy fatty acids and fatty acids derived from triglycerides or diglycerides to generate fatty acid esters of hydroxy fatty acids (FAHFAs) in adipocytes. Acts antagonistically with LDAH in regulation of cellular lipid stores. Inhibits LDAH-stimulated lipid droplet fusion. May play an important role in energy homeostasis. May play a role in the response of the organism to starvation, enhancing hydrolysis of triglycerides and providing free fatty acids to other tissues to be oxidized in situations of energy depletion. This Rattus norvegicus (Rat) protein is Patatin-like phospholipase domain-containing protein 2.